We begin with the raw amino-acid sequence, 429 residues long: Bifunctional protein GlmU (429 aa).

Residues 1–223 (MKISVLILAA…EQDFMGVNDK (223 aa)) are pyrophosphorylase. UDP-N-acetyl-alpha-D-glucosamine contacts are provided by residues 8–11 (LAAG), Lys-22, Gln-74, and 81–82 (GT). Mg(2+) is bound at residue Asp-102. Residues Gly-135, Glu-149, Asn-164, and Asn-221 each contribute to the UDP-N-acetyl-alpha-D-glucosamine site. Position 221 (Asn-221) interacts with Mg(2+). The interval 224–244 (IELCLAQDLMQEAIKKEWMKQ) is linker. The tract at residues 245-429 (GVIFHMPATT…KDYFYTKFKK (185 aa)) is N-acetyltransferase. The UDP-N-acetyl-alpha-D-glucosamine site is built by Arg-308 and Lys-325. His-336 serves as the catalytic Proton acceptor. UDP-N-acetyl-alpha-D-glucosamine-binding residues include Tyr-339 and Asn-350. Acetyl-CoA is bound by residues 359-360 (NY), Ser-378, Ala-396, and Arg-413.

This sequence in the N-terminal section; belongs to the N-acetylglucosamine-1-phosphate uridyltransferase family. It in the C-terminal section; belongs to the transferase hexapeptide repeat family. In terms of assembly, homotrimer. Mg(2+) serves as cofactor.

The protein resides in the cytoplasm. It carries out the reaction alpha-D-glucosamine 1-phosphate + acetyl-CoA = N-acetyl-alpha-D-glucosamine 1-phosphate + CoA + H(+). It catalyses the reaction N-acetyl-alpha-D-glucosamine 1-phosphate + UTP + H(+) = UDP-N-acetyl-alpha-D-glucosamine + diphosphate. The protein operates within nucleotide-sugar biosynthesis; UDP-N-acetyl-alpha-D-glucosamine biosynthesis; N-acetyl-alpha-D-glucosamine 1-phosphate from alpha-D-glucosamine 6-phosphate (route II): step 2/2. Its pathway is nucleotide-sugar biosynthesis; UDP-N-acetyl-alpha-D-glucosamine biosynthesis; UDP-N-acetyl-alpha-D-glucosamine from N-acetyl-alpha-D-glucosamine 1-phosphate: step 1/1. It participates in bacterial outer membrane biogenesis; LPS lipid A biosynthesis. In terms of biological role, catalyzes the last two sequential reactions in the de novo biosynthetic pathway for UDP-N-acetylglucosamine (UDP-GlcNAc). The C-terminal domain catalyzes the transfer of acetyl group from acetyl coenzyme A to glucosamine-1-phosphate (GlcN-1-P) to produce N-acetylglucosamine-1-phosphate (GlcNAc-1-P), which is converted into UDP-GlcNAc by the transfer of uridine 5-monophosphate (from uridine 5-triphosphate), a reaction catalyzed by the N-terminal domain. This chain is Bifunctional protein GlmU, found in Campylobacter lari (strain RM2100 / D67 / ATCC BAA-1060).